Consider the following 168-residue polypeptide: MLPAALLRRPGLGRLVRHARAYAEAAAAPAAASGPNQMSFTFASPTQVFFNGANVRQVDVPTLTGAFGILAAHVPTLQVLRPGLVVVHAEDGTTSKYFVSSGSIAVNADSSVQLLAEEAVTLDMLDLGAAKANLEKAQAELVGTADEATRAEIQIRIEANEALVKALE.

A mitochondrion-targeting transit peptide spans 1–22; the sequence is MLPAALLRRPGLGRLVRHARAY. An N6-acetyllysine; alternate mark is found at Lys-136 and Lys-165. An N6-succinyllysine; alternate mark is found at Lys-136 and Lys-165.

Belongs to the ATPase epsilon chain family. As to quaternary structure, component of the ATP synthase complex composed at least of ATP5F1A/subunit alpha, ATP5F1B/subunit beta, ATP5MC1/subunit c (homooctomer), MT-ATP6/subunit a, MT-ATP8/subunit 8, ATP5ME/subunit e, ATP5MF/subunit f, ATP5MG/subunit g, ATP5MK/subunit k, ATP5MJ/subunit j, ATP5F1C/subunit gamma, ATP5F1D/subunit delta, ATP5F1E/subunit epsilon, ATP5PF/subunit F6, ATP5PB/subunit b, ATP5PD/subunit d, ATP5PO/subunit OSCP. ATP synthase complex consists of a soluble F(1) head domain (subunits alpha(3) and beta(3)) - the catalytic core - and a membrane F(0) domain - the membrane proton channel (subunits c, a, 8, e, f, g, k and j). These two domains are linked by a central stalk (subunits gamma, delta, and epsilon) rotating inside the F1 region and a stationary peripheral stalk (subunits F6, b, d, and OSCP). Component of a complex composed at least by ATPIF1, ATP5F1A, ATP5F1B, ATP5F1C AND ATP5F1E.

The protein localises to the mitochondrion. It is found in the mitochondrion inner membrane. Functionally, subunit delta, of the mitochondrial membrane ATP synthase complex (F(1)F(0) ATP synthase or Complex V) that produces ATP from ADP in the presence of a proton gradient across the membrane which is generated by electron transport complexes of the respiratory chain. ATP synthase complex consist of a soluble F(1) head domain - the catalytic core - and a membrane F(1) domain - the membrane proton channel. These two domains are linked by a central stalk rotating inside the F(1) region and a stationary peripheral stalk. During catalysis, ATP synthesis in the catalytic domain of F(1) is coupled via a rotary mechanism of the central stalk subunits to proton translocation. In vivo, can only synthesize ATP although its ATP hydrolase activity can be activated artificially in vitro. With the central stalk subunit gamma, is essential for the biogenesis of F(1) catalytic part of the ATP synthase complex namely in the formation of F1 assembly intermediate. The sequence is that of ATP synthase F(1) complex subunit delta, mitochondrial from Homo sapiens (Human).